We begin with the raw amino-acid sequence, 121 residues long: Large ribosomal subunit protein bL19 (121 aa).

This sequence belongs to the bacterial ribosomal protein bL19 family.

Functionally, this protein is located at the 30S-50S ribosomal subunit interface and may play a role in the structure and function of the aminoacyl-tRNA binding site. The chain is Large ribosomal subunit protein bL19 from Chlorobium phaeobacteroides (strain BS1).